The primary structure comprises 635 residues: Allantoin permease (635 aa).

Residues 1 to 144 (MANDALSAIF…AGTGLQLGLN (144 aa)) lie on the Cytoplasmic side of the membrane. A helical transmembrane segment spans residues 145-165 (WWQCWLTVWIGYTFAGIFVVL). At 166–174 (NSRFGSAYH) the chain is on the extracellular side. Residues 175–195 (LSFPITVRASFGIFFSMWPII) form a helical membrane-spanning segment. Residues 196-198 (NRV) lie on the Cytoplasmic side of the membrane. A helical membrane pass occupies residues 199–219 (VMAIVWYAVQAWLGATPVALM). The Extracellular segment spans residues 220-243 (LKSIFGKNLEDRIPNHFGSPNSTT). A helical transmembrane segment spans residues 244–264 (FEFMCFFIFWVVSIPFVLVAP). Over 265–269 (HKIRH) the chain is Cytoplasmic. Residues 270 to 290 (LFTVKAALIPFAAFGFLIWAL) traverse the membrane as a helical segment. The Extracellular portion of the chain corresponds to 291–311 (KKSHGKIELGTLNDYSPHGSE). Residues 312–332 (FSWIFVRSLMACVANFAALII) traverse the membrane as a helical segment. Residues 333 to 351 (NAPDFGRFAKNPQASLWPQ) are Cytoplasmic-facing. A helical transmembrane segment spans residues 352 to 372 (LVAIPLFFAITCLIGIIVTAA). Residues 373–401 (GYHLYGVNYWSPLDVLGQFLETTYTRGTR) are Extracellular-facing. A helical membrane pass occupies residues 402–422 (AGVFLISFVFALAQLGTNISA). Topologically, residues 423–443 (NSLACGADMTALFPRYINIRR) are cytoplasmic. The chain crosses the membrane as a helical span at residues 444–464 (GSLFCVAMALCICPWNLMASS). Residues 465–466 (SK) are Extracellular-facing. The chain crosses the membrane as a helical span at residues 467-487 (FTSALGAYAIFLSSIAGVICA). The Cytoplasmic portion of the chain corresponds to 488 to 522 (DYFVVRRGYVKLTHLFLAQKGSFYMFGNKFGANWR). The helical transmembrane segment at 523 to 543 (AFVAYICGIAPNLPGFIGDVG) threads the bilayer. The Extracellular portion of the chain corresponds to 544–560 (APKITVSEGAMRLYYLG). A helical membrane pass occupies residues 561–581 (YPVGFFISAVIYLILCYFFPV). Residues 582 to 635 (PGTPVTNFLTEKGWFQRWAYVEDFEQDWKNELRRDDLCDDTVSIYDGTEEKIVY) lie on the Cytoplasmic side of the membrane.

The protein belongs to the purine-cytosine permease (2.A.39) family.

It localises to the membrane. Transport of allantoin. The polypeptide is Allantoin permease (DAL4) (Saccharomyces cerevisiae (strain ATCC 204508 / S288c) (Baker's yeast)).